We begin with the raw amino-acid sequence, 514 residues long: ATP synthase subunit alpha (514 aa).

170–177 (GDRQIGKT) contacts ATP.

The protein belongs to the ATPase alpha/beta chains family. F-type ATPases have 2 components, CF(1) - the catalytic core - and CF(0) - the membrane proton channel. CF(1) has five subunits: alpha(3), beta(3), gamma(1), delta(1), epsilon(1). CF(0) has three main subunits: a(1), b(2) and c(9-12). The alpha and beta chains form an alternating ring which encloses part of the gamma chain. CF(1) is attached to CF(0) by a central stalk formed by the gamma and epsilon chains, while a peripheral stalk is formed by the delta and b chains.

It localises to the cell inner membrane. The catalysed reaction is ATP + H2O + 4 H(+)(in) = ADP + phosphate + 5 H(+)(out). Its function is as follows. Produces ATP from ADP in the presence of a proton gradient across the membrane. The alpha chain is a regulatory subunit. This Pseudomonas putida (strain GB-1) protein is ATP synthase subunit alpha.